A 268-amino-acid polypeptide reads, in one-letter code: Tubulin-specific chaperone C (268 aa).

The C-CAP/cofactor C-like domain maps to 98–255; the sequence is PAYTTTLKKH…SAFAFEDFDI (158 aa).

The protein resides in the cytoplasm. The protein localises to the cytoskeleton. Tubulin-folding protein; involved in the early step of the tubulin folding pathway. This is Tubulin-specific chaperone C (CIN2) from Saccharomyces cerevisiae (strain ATCC 204508 / S288c) (Baker's yeast).